The following is a 76-amino-acid chain: Sea anemone sodium channel inhibitor type I (76 aa).

Positions 1 to 19 (MNRMLIIFVVVTVFGLASG) are cleaved as a signal peptide. The propeptide occupies 20–30 (LGPNMPAPDLA). Cystine bridges form between Cys-37–Cys-72, Cys-39–Cys-60, and Cys-53–Cys-73.

It belongs to the sea anemone sodium channel inhibitory toxin family. Type I subfamily. As to expression, expressed in acontia, a specialised envenomation structure laden with batteries of venom-containing nematocysts found only in the superfamily Metridioidea.

It localises to the secreted. It is found in the nematocyst. Functionally, may affect sodium channels (Nav). In Calliactis polypus (Hermit crab anemone), this protein is Sea anemone sodium channel inhibitor type I.